The following is a 66-amino-acid chain: Phylloseptin-B1 (66 aa).

An N-terminal signal peptide occupies residues 1–22 (MAFLKKSLFLVLFLGLVSLSIC). The propeptide occupies 23 to 46 (EEEKRETEEKEYDQGEDDKSEEKR). Leu65 is subject to Leucine amide.

This sequence belongs to the frog skin active peptide (FSAP) family. Phylloseptin subfamily. In terms of tissue distribution, expressed by the skin glands.

It is found in the secreted. Its subcellular location is the target cell membrane. Antimicrobial peptide with activity against only a few strains of Gram-positive bacteria (S.aureus and B.megaterium). Acts in a synergistic effect in combination with Plasticin-B1 at doses that are not active alone. The chain is Phylloseptin-B1 from Phyllomedusa bicolor (Two-colored leaf frog).